The primary structure comprises 288 residues: Glycine--tRNA ligase alpha subunit (288 aa).

Belongs to the class-II aminoacyl-tRNA synthetase family. In terms of assembly, tetramer of two alpha and two beta subunits.

Its subcellular location is the cytoplasm. The catalysed reaction is tRNA(Gly) + glycine + ATP = glycyl-tRNA(Gly) + AMP + diphosphate. The protein is Glycine--tRNA ligase alpha subunit of Rickettsia canadensis (strain McKiel).